The following is a 352-amino-acid chain: Nicotinate-nucleotide--dimethylbenzimidazole phosphoribosyltransferase (352 aa).

Catalysis depends on E316, which acts as the Proton acceptor.

Belongs to the CobT family.

It catalyses the reaction 5,6-dimethylbenzimidazole + nicotinate beta-D-ribonucleotide = alpha-ribazole 5'-phosphate + nicotinate + H(+). Its pathway is nucleoside biosynthesis; alpha-ribazole biosynthesis; alpha-ribazole from 5,6-dimethylbenzimidazole: step 1/2. In terms of biological role, catalyzes the synthesis of alpha-ribazole-5'-phosphate from nicotinate mononucleotide (NAMN) and 5,6-dimethylbenzimidazole (DMB). The sequence is that of Nicotinate-nucleotide--dimethylbenzimidazole phosphoribosyltransferase from Yersinia enterocolitica serotype O:8 / biotype 1B (strain NCTC 13174 / 8081).